The primary structure comprises 104 residues: Fluoride-specific ion channel FluC 2 (104 aa).

Helical transmembrane passes span 22-42 (IGPYVGTFIANMAACVVLAAV), 48-68 (LVMAAVGTGFAGALSTWSTLA), and 82-102 (MLLGYTTATILGGMVAVWCGL). Na(+) is bound by residues Gly59 and Ser62.

It belongs to the fluoride channel Fluc/FEX (TC 1.A.43) family.

The protein resides in the cell membrane. The catalysed reaction is fluoride(in) = fluoride(out). With respect to regulation, na(+) is not transported, but it plays an essential structural role and its presence is essential for fluoride channel function. Its function is as follows. Fluoride-specific ion channel. Important for reducing fluoride concentration in the cell, thus reducing its toxicity. This Corynebacterium diphtheriae (strain ATCC 700971 / NCTC 13129 / Biotype gravis) protein is Fluoride-specific ion channel FluC 2.